The following is a 337-amino-acid chain: 4-hydroxythreonine-4-phosphate dehydrogenase (337 aa).

2 residues coordinate substrate: histidine 138 and threonine 139. Residues histidine 168, histidine 212, and histidine 267 each contribute to the a divalent metal cation site. 3 residues coordinate substrate: lysine 275, asparagine 284, and arginine 293.

It belongs to the PdxA family. In terms of assembly, homodimer. Zn(2+) is required as a cofactor. The cofactor is Mg(2+). Requires Co(2+) as cofactor.

Its subcellular location is the cytoplasm. It carries out the reaction 4-(phosphooxy)-L-threonine + NAD(+) = 3-amino-2-oxopropyl phosphate + CO2 + NADH. It participates in cofactor biosynthesis; pyridoxine 5'-phosphate biosynthesis; pyridoxine 5'-phosphate from D-erythrose 4-phosphate: step 4/5. In terms of biological role, catalyzes the NAD(P)-dependent oxidation of 4-(phosphooxy)-L-threonine (HTP) into 2-amino-3-oxo-4-(phosphooxy)butyric acid which spontaneously decarboxylates to form 3-amino-2-oxopropyl phosphate (AHAP). This chain is 4-hydroxythreonine-4-phosphate dehydrogenase, found in Beijerinckia indica subsp. indica (strain ATCC 9039 / DSM 1715 / NCIMB 8712).